The following is an 863-amino-acid chain: Scm-like with four MBT domains protein 1 (863 aa).

MBT repeat units follow at residues 20–120 (FSWE…LEAP), 128–232 (SDWN…LQPP), 242–346 (ADWQ…INPP), and 354–451 (FDWA…LSTP). Residues 638 to 773 (KKKNKRIGRP…SDDENKPPSP (136 aa)) form a disordered region. A compositionally biased stretch (basic residues) spans 660–679 (KSSKRRKRRKNIFVHKKKRS). Over residues 680 to 691 (SASVDNTPVGSP) the composition is skewed to polar residues. 2 stretches are compositionally biased toward acidic residues: residues 696–710 (GEDE…EDSL) and 718–727 (QQEELQEESE). The span at 734-744 (SSSSPTQSETP) shows a compositional bias: low complexity. 2 positions are modified to phosphoserine: Ser764 and Ser772. An SAM domain is found at 793-861 (WSVADVVRFI…RIKFAFYEQF (69 aa)).

In terms of assembly, interacts with MYOD1. Component of the SLC (SFMBT1-LSD1-CoREST) corepressor complex, which also contains KDM1A/LSD1 and RCOR1/CoREST. Interacts with KDM1A/LSD1 and RCOR1/CoREST. Interacts with MYOD1. Interacts with L3MBTL3. In terms of tissue distribution, highly expressed in the testis, low expression is detected in brain, kidney, heart and lung. Highly expressed in germ cells, where it associates with the synaptic regions of meiotic chromosomes in pachytene stage spermatocytes.

It localises to the nucleus. In terms of biological role, histone-binding protein, which is part of various corepressor complexes. Mediates the recruitment of corepressor complexes to target genes, followed by chromatin compaction and repression of transcription. Plays a role during myogenesis: required for the maintenance of undifferentiated states of myogenic progenitor cells via interaction with MYOD1. Interaction with MYOD1 leads to the recruitment of associated corepressors and silencing of MYOD1 target genes. Part of the SLC complex in germ cells, where it may play a role during spermatogenesis. The polypeptide is Scm-like with four MBT domains protein 1 (Sfmbt1) (Mus musculus (Mouse)).